The chain runs to 484 residues: Glutamate--tRNA ligase (484 aa).

The short motif at 11–21 is the 'HIGH' region element; it reads PSPTGYLHIGN. Residues 252 to 256 carry the 'KMSKS' region motif; that stretch reads KLSKR. Lysine 255 is an ATP binding site.

Belongs to the class-I aminoacyl-tRNA synthetase family. Glutamate--tRNA ligase type 1 subfamily. As to quaternary structure, monomer.

The protein localises to the cytoplasm. The catalysed reaction is tRNA(Glu) + L-glutamate + ATP = L-glutamyl-tRNA(Glu) + AMP + diphosphate. Catalyzes the attachment of glutamate to tRNA(Glu) in a two-step reaction: glutamate is first activated by ATP to form Glu-AMP and then transferred to the acceptor end of tRNA(Glu). In Staphylococcus haemolyticus (strain JCSC1435), this protein is Glutamate--tRNA ligase.